The chain runs to 411 residues: MATADVPLSSINWQKNLFVAWCGCFLTGIAFSLVMPFLPLYVELLGVTDPHSLNMWSGLVFSITFLFSAIASPFWGGLADRKGRKIMLLRSALGMSVVMVLMGLATSIWQFLALRAVLGLLGGFVPNANALIATQVPRNKSGWALGWLSTGAVSGALIGPLIGGLLADSFGLRPVFFITASVLFVCFIMTLFAVREEFVPVQKKDMLHAHQVFTTLKNPRLVLTLFVTTMIIQVATGSIAPILTLYVRDLAGDIQNLAFVSGLIASVPGVAALISAPRLGKLGDRIGPERILVAMLLVSVLLLIPMSMVQNPLQLGILRFLLGAADGALLPAVQTLLIYNASNQVAGRIFSYNQSFRDIGNVTGPLMGAAVSAHWGFRAVFVVTACVVLFNAIYSWITLRRRVDRSSMLDE.

The next 11 membrane-spanning stretches (helical) occupy residues 17-37 (LFVA…VMPF), 59-79 (LVFS…GGLA), 92-112 (ALGM…WQFL), 116-136 (AVLG…ATQV), 147-167 (WLST…GLLA), 174-194 (PVFF…LFAV), 222-242 (VLTL…IAPI), 257-277 (LAFV…ISAP), 291-311 (ILVA…MVQN), 320-340 (FLLG…LIYN), and 379-399 (AVFV…WITL).

This sequence belongs to the major facilitator superfamily. DHA1 family. MdtG (TC 2.A.1.2.20) subfamily.

The protein resides in the cell inner membrane. The protein is Multidrug resistance protein MdtG of Erwinia billingiae (strain Eb661).